The sequence spans 420 residues: Gamma-glutamyl phosphate reductase (420 aa).

The protein belongs to the gamma-glutamyl phosphate reductase family.

It localises to the cytoplasm. It catalyses the reaction L-glutamate 5-semialdehyde + phosphate + NADP(+) = L-glutamyl 5-phosphate + NADPH + H(+). Its pathway is amino-acid biosynthesis; L-proline biosynthesis; L-glutamate 5-semialdehyde from L-glutamate: step 2/2. Catalyzes the NADPH-dependent reduction of L-glutamate 5-phosphate into L-glutamate 5-semialdehyde and phosphate. The product spontaneously undergoes cyclization to form 1-pyrroline-5-carboxylate. The sequence is that of Gamma-glutamyl phosphate reductase from Neisseria meningitidis serogroup A / serotype 4A (strain DSM 15465 / Z2491).